Here is a 159-residue protein sequence, read N- to C-terminus: Riboflavin kinase (159 aa).

38–43 serves as a coordination point for CDP; that stretch reads GLGEGR. Mg(2+) contacts are provided by Thr67 and Asn69. FMN is bound by residues Thr126 and Glu134. CDP is bound at residue 139–142; that stretch reads HKLR.

It belongs to the archaeal riboflavin kinase family. Requires Mg(2+) as cofactor.

The enzyme catalyses riboflavin + CTP = CDP + FMN + H(+). The protein operates within cofactor biosynthesis; FMN biosynthesis; FMN from riboflavin (CTP route): step 1/1. Catalyzes the CTP-dependent phosphorylation of riboflavin (vitamin B2) to form flavin mononucleotide (FMN). This is Riboflavin kinase from Sulfolobus acidocaldarius (strain ATCC 33909 / DSM 639 / JCM 8929 / NBRC 15157 / NCIMB 11770).